The primary structure comprises 371 residues: Queuine tRNA-ribosyltransferase (371 aa).

D89 acts as the Proton acceptor in catalysis. Substrate-binding positions include 89–93 (DSGGF), D143, Q185, and G212. Residues 243–249 (GVGKPED) are RNA binding. D262 (nucleophile) is an active-site residue. The segment at 267-271 (TRNAR) is RNA binding; important for wobble base 34 recognition. Zn(2+) contacts are provided by C300, C302, C305, and H331.

The protein belongs to the queuine tRNA-ribosyltransferase family. In terms of assembly, homodimer. Within each dimer, one monomer is responsible for RNA recognition and catalysis, while the other monomer binds to the replacement base PreQ1. Zn(2+) serves as cofactor.

The catalysed reaction is 7-aminomethyl-7-carbaguanine + guanosine(34) in tRNA = 7-aminomethyl-7-carbaguanosine(34) in tRNA + guanine. The protein operates within tRNA modification; tRNA-queuosine biosynthesis. Catalyzes the base-exchange of a guanine (G) residue with the queuine precursor 7-aminomethyl-7-deazaguanine (PreQ1) at position 34 (anticodon wobble position) in tRNAs with GU(N) anticodons (tRNA-Asp, -Asn, -His and -Tyr). Catalysis occurs through a double-displacement mechanism. The nucleophile active site attacks the C1' of nucleotide 34 to detach the guanine base from the RNA, forming a covalent enzyme-RNA intermediate. The proton acceptor active site deprotonates the incoming PreQ1, allowing a nucleophilic attack on the C1' of the ribose to form the product. After dissociation, two additional enzymatic reactions on the tRNA convert PreQ1 to queuine (Q), resulting in the hypermodified nucleoside queuosine (7-(((4,5-cis-dihydroxy-2-cyclopenten-1-yl)amino)methyl)-7-deazaguanosine). The sequence is that of Queuine tRNA-ribosyltransferase from Pseudomonas putida (strain ATCC 47054 / DSM 6125 / CFBP 8728 / NCIMB 11950 / KT2440).